The sequence spans 354 residues: Methionine import ATP-binding protein MetN (354 aa).

The ABC transporter domain maps to 8–250 (LDHIDITFRQ…PKEALTQEFI (243 aa)). 42 to 49 (GYSGAGKS) lines the ATP pocket.

Belongs to the ABC transporter superfamily. Methionine importer (TC 3.A.1.24) family. As to quaternary structure, the complex is composed of two ATP-binding proteins (MetN), two transmembrane proteins (MetI) and a solute-binding protein (MetQ).

The protein localises to the cell membrane. It catalyses the reaction L-methionine(out) + ATP + H2O = L-methionine(in) + ADP + phosphate + H(+). The enzyme catalyses D-methionine(out) + ATP + H2O = D-methionine(in) + ADP + phosphate + H(+). In terms of biological role, part of the ABC transporter complex MetNIQ involved in methionine import. Responsible for energy coupling to the transport system. This Streptococcus pyogenes serotype M3 (strain ATCC BAA-595 / MGAS315) protein is Methionine import ATP-binding protein MetN.